The sequence spans 194 residues: MTQRIASHSRKTAETDISATVNLDGSGTSAIETGVVFLDHMLTNFSRHSGIDVQLRCSGDLEVDDHHTVEDVALVLGKAIVDALGDKKGIGRYGWAIIPMDEALAQCSIDLGGRSYCVFRAEFQRPVIQGLSTEMVEHFFVSLSRTMNANLHLAVLEGRNTHHMIEALFKSLAYAMKQAVKVESTEIKSTKGAI.

The protein belongs to the imidazoleglycerol-phosphate dehydratase family.

It is found in the cytoplasm. The catalysed reaction is D-erythro-1-(imidazol-4-yl)glycerol 3-phosphate = 3-(imidazol-4-yl)-2-oxopropyl phosphate + H2O. The protein operates within amino-acid biosynthesis; L-histidine biosynthesis; L-histidine from 5-phospho-alpha-D-ribose 1-diphosphate: step 6/9. The chain is Imidazoleglycerol-phosphate dehydratase from Chlorobaculum tepidum (strain ATCC 49652 / DSM 12025 / NBRC 103806 / TLS) (Chlorobium tepidum).